Reading from the N-terminus, the 70-residue chain is Cytochrome c oxidase subunit 8B, mitochondrial (70 aa).

A mitochondrion-targeting transit peptide spans M1 to R24. Over I25 to S35 the chain is Mitochondrial matrix. A helical transmembrane segment spans residues A36–S59. Topologically, residues H60–A70 are mitochondrial intermembrane.

This sequence belongs to the cytochrome c oxidase VIII family. As to quaternary structure, component of the cytochrome c oxidase (complex IV, CIV), a multisubunit enzyme composed of 14 subunits. The complex is composed of a catalytic core of 3 subunits MT-CO1, MT-CO2 and MT-CO3, encoded in the mitochondrial DNA, and 11 supernumerary subunits COX4I, COX5A, COX5B, COX6A, COX6B, COX6C, COX7A, COX7B, COX7C, COX8 and NDUFA4, which are encoded in the nuclear genome. The complex exists as a monomer or a dimer and forms supercomplexes (SCs) in the inner mitochondrial membrane with NADH-ubiquinone oxidoreductase (complex I, CI) and ubiquinol-cytochrome c oxidoreductase (cytochrome b-c1 complex, complex III, CIII), resulting in different assemblies (supercomplex SCI(1)III(2)IV(1) and megacomplex MCI(2)III(2)IV(2)).

The protein localises to the mitochondrion inner membrane. It participates in energy metabolism; oxidative phosphorylation. Component of the cytochrome c oxidase, the last enzyme in the mitochondrial electron transport chain which drives oxidative phosphorylation. The respiratory chain contains 3 multisubunit complexes succinate dehydrogenase (complex II, CII), ubiquinol-cytochrome c oxidoreductase (cytochrome b-c1 complex, complex III, CIII) and cytochrome c oxidase (complex IV, CIV), that cooperate to transfer electrons derived from NADH and succinate to molecular oxygen, creating an electrochemical gradient over the inner membrane that drives transmembrane transport and the ATP synthase. Cytochrome c oxidase is the component of the respiratory chain that catalyzes the reduction of oxygen to water. Electrons originating from reduced cytochrome c in the intermembrane space (IMS) are transferred via the dinuclear copper A center (CU(A)) of subunit 2 and heme A of subunit 1 to the active site in subunit 1, a binuclear center (BNC) formed by heme A3 and copper B (CU(B)). The BNC reduces molecular oxygen to 2 water molecules using 4 electrons from cytochrome c in the IMS and 4 protons from the mitochondrial matrix. The protein is Cytochrome c oxidase subunit 8B, mitochondrial (Cox8b) of Rattus norvegicus (Rat).